Reading from the N-terminus, the 196-residue chain is MQFSENFERAKKEALISLEIALRKGEVDEDIIPLLKKINSLDNYFTTSSCSGRISVMEMPHFGDKVNAKWLGKWHREVSLDEVLGAIKKHRSGQLWFLVRSPILHVGAKTLEDAIRLVNLAVSCGFKYSNIKSISNKKLIVEIRSTERMDVLLGENGRILVGEEYLRKIVEIANAQVRRFKEKLKRLESNIDALNR.

This sequence belongs to the TYW3 family.

It catalyses the reaction 4-demethyl-7-[(3S)-3-amino-3-carboxypropyl]wyosine(37) in tRNA(Phe) + S-adenosyl-L-methionine = 7-[(3S)-3-amino-3-carboxypropyl]wyosine(37) in tRNA(Phe) + S-adenosyl-L-homocysteine + H(+). S-adenosyl-L-methionine-dependent methyltransferase that acts as a component of the wyosine derivatives biosynthesis pathway. Probably methylates N-4 position of wybutosine-86 to produce wybutosine-72. This chain is tRNA(Phe) 7-((3-amino-3-carboxypropyl)-4-demethylwyosine(37)-N(4))-methyltransferase 1, found in Pyrococcus furiosus (strain ATCC 43587 / DSM 3638 / JCM 8422 / Vc1).